A 529-amino-acid chain; its full sequence is Glutamyl-tRNA reductase (529 aa).

A substrate-binding site is contributed by 47 to 50 (TCNR). Cys-48 functions as the Nucleophile in the catalytic mechanism. The disordered stretch occupies residues 56-80 (SPRQQAPAPPRPGSAPPPSDEELSR). Residues 62–73 (PAPPRPGSAPPP) show a composition bias toward pro residues. Substrate-binding positions include Ser-125, 130 to 132 (EPQ), and Gln-136. 205 to 210 (GAGDMA) contacts NADP(+). A disordered region spans residues 454-505 (RGAVDGPPTPRSARGAAPPASGARGGGSPRHADPRPQAAEDNGVYARQPGGR). Over residues 464 to 475 (RSARGAAPPASG) the composition is skewed to low complexity.

The protein belongs to the glutamyl-tRNA reductase family. Homodimer.

It carries out the reaction (S)-4-amino-5-oxopentanoate + tRNA(Glu) + NADP(+) = L-glutamyl-tRNA(Glu) + NADPH + H(+). Its pathway is porphyrin-containing compound metabolism; protoporphyrin-IX biosynthesis; 5-aminolevulinate from L-glutamyl-tRNA(Glu): step 1/2. In terms of biological role, catalyzes the NADPH-dependent reduction of glutamyl-tRNA(Glu) to glutamate 1-semialdehyde (GSA). The protein is Glutamyl-tRNA reductase of Sorangium cellulosum (strain So ce56) (Polyangium cellulosum (strain So ce56)).